Here is a 365-residue protein sequence, read N- to C-terminus: S-adenosylmethionine:tRNA ribosyltransferase-isomerase (365 aa).

Belongs to the QueA family. In terms of assembly, monomer.

The protein resides in the cytoplasm. The enzyme catalyses 7-aminomethyl-7-carbaguanosine(34) in tRNA + S-adenosyl-L-methionine = epoxyqueuosine(34) in tRNA + adenine + L-methionine + 2 H(+). Its pathway is tRNA modification; tRNA-queuosine biosynthesis. Transfers and isomerizes the ribose moiety from AdoMet to the 7-aminomethyl group of 7-deazaguanine (preQ1-tRNA) to give epoxyqueuosine (oQ-tRNA). The protein is S-adenosylmethionine:tRNA ribosyltransferase-isomerase of Prochlorococcus marinus (strain NATL2A).